Consider the following 63-residue polypeptide: MSDVTVVNCPTCGKPVVWGEISPFRPFCSKRCQLIDLGEWAAEEKRIASSGDQSDSDDWSEER.

Zn(2+)-binding residues include Cys9, Cys12, Cys28, and Cys32.

Belongs to the DNA gyrase inhibitor YacG family. In terms of assembly, interacts with GyrB. Zn(2+) is required as a cofactor.

Its function is as follows. Inhibits all the catalytic activities of DNA gyrase by preventing its interaction with DNA. Acts by binding directly to the C-terminal domain of GyrB, which probably disrupts DNA binding by the gyrase. The protein is DNA gyrase inhibitor YacG of Salmonella choleraesuis (strain SC-B67).